A 406-amino-acid polypeptide reads, in one-letter code: Testis-specific Y-encoded-like protein 5 (406 aa).

Residues 1-25 (MSGRSRGRKSSRAKGRGKGRARARV) show a composition bias toward basic residues. Disordered stretches follow at residues 1–67 (MSGR…PAEL), 132–164 (IGNR…PKMA), and 382–406 (RGEK…RQPN). A compositionally biased stretch (basic and acidic residues) spans 27 to 38 (AAAEDAWHDEKP). Residues 49 to 62 (AAAQVQAGAAQGGA) are compositionally biased toward low complexity. Over residues 382–392 (RGEKGKEERPG) the composition is skewed to basic and acidic residues.

It belongs to the nucleosome assembly protein (NAP) family. In terms of assembly, interacts with USP7.

In terms of biological role, involved in modulation of cell growth and cellular response to gamma radiation probably via regulation of the Akt signaling pathway. Involved in regulation of p53/TP53. Suppresses p53/TP53 protein levels and promotes its ubiquitination; the function is dependent on USP7 and independent on MDM2. Proposed to displace p53/TP53 from interaction with USP7. The polypeptide is Testis-specific Y-encoded-like protein 5 (Tspyl5) (Mus musculus (Mouse)).